Here is a 165-residue protein sequence, read N- to C-terminus: Small ribosomal subunit protein bS16 (165 aa).

Belongs to the bacterial ribosomal protein bS16 family.

This chain is Small ribosomal subunit protein bS16, found in Azobacteroides pseudotrichonymphae genomovar. CFP2.